The sequence spans 684 residues: Nuclear transcription factor Y subunit gamma (684 aa).

Disordered stretches follow at residues 1-74 (MENQ…NIST), 112-238 (MNSP…SSFQ), 414-487 (HSPQ…TQQL), and 511-650 (QQQQ…KNDE). Residues 21 to 49 (SNSHNNHHNNNNNNNYNNNNNNNINNINN) are compositionally biased toward low complexity. Over residues 58-74 (KSIQQHSPHSSTPNIST) the composition is skewed to polar residues. The segment covering 142-162 (HQHPSSASSSSSSSSSSLSSS) has biased composition (low complexity). Residues 163–176 (SHHHHSNHHHHHPN) are compositionally biased toward basic residues. Residues 188–203 (PSLNDSSSNGNGTPAL) show a composition bias toward polar residues. Over residues 220–238 (TPTSTPNQRFQSNGSSSFQ) the composition is skewed to low complexity. The span at 414 to 423 (HSPQLQEQSS) shows a compositional bias: polar residues. Low complexity predominate over residues 424–437 (NNNNNNNNNNNNNN). 2 stretches are compositionally biased toward polar residues: residues 438 to 456 (SVSV…SPLS) and 464 to 477 (SQDY…NNHN). Low complexity-rich tracts occupy residues 478 to 487 (QSSLSQTQQL), 511 to 522 (QQQQHSQQISQQ), and 529 to 637 (PSNS…NNNN).

Belongs to the NFYC/HAP5 subunit family. In terms of assembly, heterotrimeric transcription factor composed of three components, NF-YA, NF-YB and NF-YC. NF-YB and NF-YC must interact and dimerize for NF-YA association and DNA binding.

It localises to the nucleus. Its function is as follows. Stimulates the transcription of various genes by recognizing and binding to a CCAAT motif in promoters. The polypeptide is Nuclear transcription factor Y subunit gamma (nfyc-1) (Dictyostelium discoideum (Social amoeba)).